A 260-amino-acid chain; its full sequence is Hemin import ATP-binding protein HmuV (260 aa).

Positions 2-239 constitute an ABC transporter domain; the sequence is IRAENITLIR…ETIARVYGIG (238 aa). 34 to 41 is an ATP binding site; sequence GPNGAGKS.

It belongs to the ABC transporter superfamily. Heme (hemin) importer (TC 3.A.1.14.5) family. As to quaternary structure, the complex is composed of two ATP-binding proteins (HmuV), two transmembrane proteins (HmuU) and a solute-binding protein (HmuT).

It localises to the cell inner membrane. In terms of biological role, part of the ABC transporter complex HmuTUV involved in hemin import. Responsible for energy coupling to the transport system. The sequence is that of Hemin import ATP-binding protein HmuV from Agrobacterium fabrum (strain C58 / ATCC 33970) (Agrobacterium tumefaciens (strain C58)).